The sequence spans 122 residues: Large ribosomal subunit protein uL18 (122 aa).

This sequence belongs to the universal ribosomal protein uL18 family. As to quaternary structure, part of the 50S ribosomal subunit; part of the 5S rRNA/L5/L18/L25 subcomplex. Contacts the 5S and 23S rRNAs.

Functionally, this is one of the proteins that bind and probably mediate the attachment of the 5S RNA into the large ribosomal subunit, where it forms part of the central protuberance. This is Large ribosomal subunit protein uL18 from Prochlorococcus marinus (strain AS9601).